The sequence spans 234 residues: Glucosamine-6-phosphate deaminase (234 aa).

Asp63 serves as the catalytic Proton acceptor; for enolization step. The For ring-opening step role is filled by Asn129. Residue His131 is the Proton acceptor; for ring-opening step of the active site. Residue Glu136 is the For ring-opening step of the active site.

The protein belongs to the glucosamine/galactosamine-6-phosphate isomerase family. NagB subfamily.

The enzyme catalyses alpha-D-glucosamine 6-phosphate + H2O = beta-D-fructose 6-phosphate + NH4(+). It functions in the pathway amino-sugar metabolism; N-acetylneuraminate degradation; D-fructose 6-phosphate from N-acetylneuraminate: step 5/5. Functionally, catalyzes the reversible isomerization-deamination of glucosamine 6-phosphate (GlcN6P) to form fructose 6-phosphate (Fru6P) and ammonium ion. This Listeria monocytogenes serotype 4a (strain HCC23) protein is Glucosamine-6-phosphate deaminase.